The following is a 564-amino-acid chain: Nucleolus and neural progenitor protein (564 aa).

Residues 431–495 (GSRTSTSEHP…KRRCSGTVQR (65 aa)) form a disordered region. A compositionally biased stretch (basic residues) spans 442-459 (RQRRSKYKVLSRQRKPQR). The tract at residues 442 to 460 (RQRRSKYKVLSRQRKPQRK) is nuclear localization signal. The span at 460 to 473 (KLQSTLLKETQQVP) shows a compositional bias: polar residues.

The protein belongs to the nepro family.

The protein resides in the nucleus. It localises to the nucleolus. Its function is as follows. May play a role in cortex development as part of the Notch signaling pathway. Downstream of Notch may repress the expression of proneural genes and inhibit neuronal differentiation thereby maintaining neural progenitors. May also play a role in preimplentation embryo development. This Mus musculus (Mouse) protein is Nucleolus and neural progenitor protein.